A 235-amino-acid polypeptide reads, in one-letter code: Ribosomal RNA small subunit methyltransferase G (235 aa).

Residues Gly74, Leu79, 124–125 (AE), and Arg142 each bind S-adenosyl-L-methionine. A disordered region spans residues 211–235 (RRRAAKPGRNKSGRTARSRGRTGRR). Residues 213–235 (RAAKPGRNKSGRTARSRGRTGRR) are compositionally biased toward basic residues.

This sequence belongs to the methyltransferase superfamily. RNA methyltransferase RsmG family.

Its subcellular location is the cytoplasm. Functionally, specifically methylates the N7 position of guanine in position 518 of 16S rRNA. The chain is Ribosomal RNA small subunit methyltransferase G from Mycolicibacterium smegmatis (strain ATCC 700084 / mc(2)155) (Mycobacterium smegmatis).